A 460-amino-acid chain; its full sequence is Kynurenine 3-monooxygenase (460 aa).

Residues V13, 32-34, and A53 each bind FAD; that span reads DFR. Positions 83 and 97 each coordinate L-kynurenine. Residues R109, L133, Y195, D314, and 325–328 each bind FAD; that span reads QGMN. Residues N373 and Y408 each coordinate L-kynurenine.

The protein belongs to the aromatic-ring hydroxylase family. KMO subfamily. FAD serves as cofactor.

Its subcellular location is the mitochondrion outer membrane. It carries out the reaction L-kynurenine + NADPH + O2 + H(+) = 3-hydroxy-L-kynurenine + NADP(+) + H2O. It participates in cofactor biosynthesis; NAD(+) biosynthesis; quinolinate from L-kynurenine: step 1/3. Its function is as follows. Catalyzes the hydroxylation of L-kynurenine (L-Kyn) to form 3-hydroxy-L-kynurenine (L-3OHKyn). Required for synthesis of quinolinic acid. This is Kynurenine 3-monooxygenase from Saccharomyces cerevisiae (strain ATCC 204508 / S288c) (Baker's yeast).